The following is a 261-amino-acid chain: Glucosamine-6-phosphate deaminase (261 aa).

The active-site Proton acceptor; for enolization step is the D67. N135 acts as the For ring-opening step in catalysis. Residue H137 is the Proton acceptor; for ring-opening step of the active site. E142 serves as the catalytic For ring-opening step.

The protein belongs to the glucosamine/galactosamine-6-phosphate isomerase family. NagB subfamily. Homohexamer.

It catalyses the reaction alpha-D-glucosamine 6-phosphate + H2O = beta-D-fructose 6-phosphate + NH4(+). Its pathway is amino-sugar metabolism; N-acetylneuraminate degradation; D-fructose 6-phosphate from N-acetylneuraminate: step 5/5. In terms of biological role, catalyzes the reversible isomerization-deamination of glucosamine 6-phosphate (GlcN6P) to form fructose 6-phosphate (Fru6P) and ammonium ion. The sequence is that of Glucosamine-6-phosphate deaminase from Hahella chejuensis (strain KCTC 2396).